A 548-amino-acid chain; its full sequence is Chaperonin GroEL (548 aa).

ATP-binding positions include 29-32, Lys-50, 86-90, Gly-414, 478-480, and Asp-494; these read TMGP, DGTTT, and NAA.

It belongs to the chaperonin (HSP60) family. Forms a cylinder of 14 subunits composed of two heptameric rings stacked back-to-back. Interacts with the co-chaperonin GroES.

It is found in the cytoplasm. The enzyme catalyses ATP + H2O + a folded polypeptide = ADP + phosphate + an unfolded polypeptide.. Functionally, together with its co-chaperonin GroES, plays an essential role in assisting protein folding. The GroEL-GroES system forms a nano-cage that allows encapsulation of the non-native substrate proteins and provides a physical environment optimized to promote and accelerate protein folding. May play a protective role against the defense mechanisms generated by the infected macrophages. The sequence is that of Chaperonin GroEL from Legionella pneumophila.